Here is a 165-residue protein sequence, read N- to C-terminus: SsrA-binding protein (165 aa).

A disordered region spans residues 141–165 (KLHDKRQEEKRKQADREVKSALARY). The span at 145–159 (KRQEEKRKQADREVK) shows a compositional bias: basic and acidic residues.

It belongs to the SmpB family.

It localises to the cytoplasm. Functionally, required for rescue of stalled ribosomes mediated by trans-translation. Binds to transfer-messenger RNA (tmRNA), required for stable association of tmRNA with ribosomes. tmRNA and SmpB together mimic tRNA shape, replacing the anticodon stem-loop with SmpB. tmRNA is encoded by the ssrA gene; the 2 termini fold to resemble tRNA(Ala) and it encodes a 'tag peptide', a short internal open reading frame. During trans-translation Ala-aminoacylated tmRNA acts like a tRNA, entering the A-site of stalled ribosomes, displacing the stalled mRNA. The ribosome then switches to translate the ORF on the tmRNA; the nascent peptide is terminated with the 'tag peptide' encoded by the tmRNA and targeted for degradation. The ribosome is freed to recommence translation, which seems to be the essential function of trans-translation. This Prochlorococcus marinus (strain MIT 9303) protein is SsrA-binding protein.